The sequence spans 751 residues: Probable alpha-galactosidase C (751 aa).

The N-terminal stretch at 1–27 (MFGSPKRAALAAASLLAVFGNGPSVMA) is a signal peptide. N-linked (GlcNAc...) asparagine glycans are attached at residues asparagine 49, asparagine 57, asparagine 162, asparagine 186, asparagine 194, asparagine 366, asparagine 433, asparagine 452, and asparagine 500. Aspartate 510 (nucleophile) is an active-site residue. The active-site Proton donor is aspartate 572. Asparagine 720 is a glycosylation site (N-linked (GlcNAc...) asparagine).

It belongs to the glycosyl hydrolase 36 family. In terms of assembly, homotetramer. Mg(2+) is required as a cofactor. Requires NAD(+) as cofactor.

The protein resides in the secreted. The enzyme catalyses Hydrolysis of terminal, non-reducing alpha-D-galactose residues in alpha-D-galactosides, including galactose oligosaccharides, galactomannans and galactolipids.. In terms of biological role, hydrolyzes a variety of simple alpha-D-galactoside as well as more complex molecules such as oligosaccharides and polysaccharides. The chain is Probable alpha-galactosidase C (aglC) from Aspergillus oryzae (strain ATCC 42149 / RIB 40) (Yellow koji mold).